The following is a 209-amino-acid chain: Mitochondrial import inner membrane translocase subunit Tim23 (209 aa).

The next 3 membrane-spanning stretches (helical) occupy residues 73 to 93, 125 to 145, and 181 to 197; these read FELA…FGAL, ALWA…GVII, and GLAG…YNNW.

It belongs to the Tim17/Tim22/Tim23 family. As to quaternary structure, component of the TIM23 complex at least composed of TIMM23, TIMM17 (TIMM17A or TIMM17B) and TIMM50; within this complex, directly interacts with TIMM50. The complex interacts with the TIMM44 component of the PAM complex and with DNAJC15. Upon mitochondrial depolarization, interacts with PINK1; the interaction is required for PINK1 accumulation at the outer mitochondrial membrane, kinase activation by autophosphorylation and PRKN recruitement to mitochondria.

It localises to the mitochondrion inner membrane. Essential component of the TIM23 complex, a complex that mediates the translocation of transit peptide-containing proteins across the mitochondrial inner membrane. Has a role in the activation of stress-induced mitophagy by protecting PINK1 from OMA1-mediated degradation and facilitating its accumulation at the outer mitochondrial membrane in response to depolarization. The chain is Mitochondrial import inner membrane translocase subunit Tim23 (Timm23) from Rattus norvegicus (Rat).